We begin with the raw amino-acid sequence, 285 residues long: Urease accessory protein UreD 1 (285 aa).

Belongs to the UreD family. In terms of assembly, ureD, UreF and UreG form a complex that acts as a GTP-hydrolysis-dependent molecular chaperone, activating the urease apoprotein by helping to assemble the nickel containing metallocenter of UreC. The UreE protein probably delivers the nickel.

The protein localises to the cytoplasm. In terms of biological role, required for maturation of urease via the functional incorporation of the urease nickel metallocenter. This Pseudomonas syringae pv. tomato (strain ATCC BAA-871 / DC3000) protein is Urease accessory protein UreD 1.